A 475-amino-acid polypeptide reads, in one-letter code: Tetratricopeptide repeat protein 29 (475 aa).

7 TPR repeats span residues 92–131 (DALR…EDAE), 136–173 (FEDV…AQLI), 182–215 (AEAH…TQGR), 234–267 (LRTY…AKEG), 274–307 (GEAS…STEL), 314–347 (GRAY…ARNN), and 354–387 (VRAS…TVEL). The disordered stretch occupies residues 436–475 (DIEPDPVTEEFRGSTVETVSQNSEHLEELSRFPGDQKNET). Basic and acidic residues predominate over residues 459–475 (EHLEELSRFPGDQKNET).

The protein localises to the cytoplasm. It localises to the cytoskeleton. It is found in the flagellum axoneme. Functionally, axonemal protein which is implicated in axonemal and/or peri-axonemal structure assembly and regulates flagellum assembly and beating and therefore sperm motility. The polypeptide is Tetratricopeptide repeat protein 29 (TTC29) (Macaca fascicularis (Crab-eating macaque)).